The sequence spans 104 residues: N(2)-fixation sustaining protein CowN (104 aa).

Belongs to the CowN family.

Functionally, is required to sustain N(2)-dependent growth in the presence of low levels of carbon monoxide (CO). Probably acts by protecting the N(2) fixation ability of the nitrogenase complex, which is inactivated in the presence of CO. The chain is N(2)-fixation sustaining protein CowN from Arcobacter nitrofigilis (strain ATCC 33309 / DSM 7299 / CCUG 15893 / LMG 7604 / NCTC 12251 / CI) (Campylobacter nitrofigilis).